A 645-amino-acid polypeptide reads, in one-letter code: DNA mismatch repair protein MutL (645 aa).

Residues Val371 to Asn403 are disordered. Basic and acidic residues predominate over residues His372–Asn387. The span at Ser390–Ser402 shows a compositional bias: low complexity.

This sequence belongs to the DNA mismatch repair MutL/HexB family.

This protein is involved in the repair of mismatches in DNA. It is required for dam-dependent methyl-directed DNA mismatch repair. May act as a 'molecular matchmaker', a protein that promotes the formation of a stable complex between two or more DNA-binding proteins in an ATP-dependent manner without itself being part of a final effector complex. This Staphylococcus epidermidis (strain ATCC 35984 / DSM 28319 / BCRC 17069 / CCUG 31568 / BM 3577 / RP62A) protein is DNA mismatch repair protein MutL.